A 516-amino-acid polypeptide reads, in one-letter code: 2-isopropylmalate synthase (516 aa).

Residues 8-270 (IYIFDTTLRD…YTGIKTESIY (263 aa)) form the Pyruvate carboxyltransferase domain. Residues D17, H205, H207, and N241 each contribute to the Mn(2+) site. Positions 394–516 (KLIYLNVVSG…DAGKIKSEYE (123 aa)) are regulatory domain.

The protein belongs to the alpha-IPM synthase/homocitrate synthase family. LeuA type 1 subfamily. In terms of assembly, homodimer. Mn(2+) is required as a cofactor.

It is found in the cytoplasm. It catalyses the reaction 3-methyl-2-oxobutanoate + acetyl-CoA + H2O = (2S)-2-isopropylmalate + CoA + H(+). The protein operates within amino-acid biosynthesis; L-leucine biosynthesis; L-leucine from 3-methyl-2-oxobutanoate: step 1/4. Catalyzes the condensation of the acetyl group of acetyl-CoA with 3-methyl-2-oxobutanoate (2-ketoisovalerate) to form 3-carboxy-3-hydroxy-4-methylpentanoate (2-isopropylmalate). The polypeptide is 2-isopropylmalate synthase (Syntrophus aciditrophicus (strain SB)).